A 545-amino-acid chain; its full sequence is Glucose-6-phosphate isomerase (545 aa).

Glu-351 functions as the Proton donor in the catalytic mechanism. Catalysis depends on residues His-382 and Lys-510.

Belongs to the GPI family.

The protein resides in the cytoplasm. The enzyme catalyses alpha-D-glucose 6-phosphate = beta-D-fructose 6-phosphate. The protein operates within carbohydrate biosynthesis; gluconeogenesis. It participates in carbohydrate degradation; glycolysis; D-glyceraldehyde 3-phosphate and glycerone phosphate from D-glucose: step 2/4. In terms of biological role, catalyzes the reversible isomerization of glucose-6-phosphate to fructose-6-phosphate. The protein is Glucose-6-phosphate isomerase of Shewanella sp. (strain MR-4).